We begin with the raw amino-acid sequence, 33 residues long: Protamine-M6/M7 (33 aa).

A disordered region spans residues 1-33 (PRRRRETSRPIRRRRRARRAPIRRRRRVVRRRR).

In terms of tissue distribution, testis.

It is found in the nucleus. The protein localises to the chromosome. Its function is as follows. Protamines substitute for histones in the chromatin of sperm during the haploid phase of spermatogenesis. They compact sperm DNA into a highly condensed, stable and inactive complex. The chain is Protamine-M6/M7 from Mugil cephalus (Flathead mullet).